The sequence spans 445 residues: Trigger factor (445 aa).

In terms of domain architecture, PPIase FKBP-type spans glycine 164–proline 249.

The protein belongs to the FKBP-type PPIase family. Tig subfamily.

It localises to the cytoplasm. The catalysed reaction is [protein]-peptidylproline (omega=180) = [protein]-peptidylproline (omega=0). Its function is as follows. Involved in protein export. Acts as a chaperone by maintaining the newly synthesized protein in an open conformation. Functions as a peptidyl-prolyl cis-trans isomerase. The polypeptide is Trigger factor (Psychrobacter sp. (strain PRwf-1)).